A 459-amino-acid polypeptide reads, in one-letter code: Ribulose bisphosphate carboxylase large chain (459 aa).

Residue K4 is modified to N6,N6,N6-trimethyllysine. The substrate site is built by N113 and T163. K165 functions as the Proton acceptor in the catalytic mechanism. K167 is a binding site for substrate. Positions 191, 193, and 194 each coordinate Mg(2+). K191 is modified (N6-carboxylysine). H284 (proton acceptor) is an active-site residue. Residues R285, H317, and S369 each contribute to the substrate site.

This sequence belongs to the RuBisCO large chain family. Type I subfamily. As to quaternary structure, heterohexadecamer of 8 large chains and 8 small chains; disulfide-linked. The disulfide link is formed within the large subunit homodimers. Requires Mg(2+) as cofactor. In terms of processing, the disulfide bond which can form in the large chain dimeric partners within the hexadecamer appears to be associated with oxidative stress and protein turnover.

Its subcellular location is the plastid. The protein localises to the chloroplast. The enzyme catalyses 2 (2R)-3-phosphoglycerate + 2 H(+) = D-ribulose 1,5-bisphosphate + CO2 + H2O. The catalysed reaction is D-ribulose 1,5-bisphosphate + O2 = 2-phosphoglycolate + (2R)-3-phosphoglycerate + 2 H(+). RuBisCO catalyzes two reactions: the carboxylation of D-ribulose 1,5-bisphosphate, the primary event in carbon dioxide fixation, as well as the oxidative fragmentation of the pentose substrate in the photorespiration process. Both reactions occur simultaneously and in competition at the same active site. In Roridula gorgonias (South African fly bush), this protein is Ribulose bisphosphate carboxylase large chain.